A 608-amino-acid chain; its full sequence is Elongation factor 4 (608 aa).

Positions 11–193 constitute a tr-type G domain; it reads KKIRNFSIIA…QIVEKVPEPS (183 aa). Residues 23-28 and 140-143 each bind GTP; these read DHGKST and NKID.

This sequence belongs to the TRAFAC class translation factor GTPase superfamily. Classic translation factor GTPase family. LepA subfamily.

The protein localises to the cell membrane. It carries out the reaction GTP + H2O = GDP + phosphate + H(+). Its function is as follows. Required for accurate and efficient protein synthesis under certain stress conditions. May act as a fidelity factor of the translation reaction, by catalyzing a one-codon backward translocation of tRNAs on improperly translocated ribosomes. Back-translocation proceeds from a post-translocation (POST) complex to a pre-translocation (PRE) complex, thus giving elongation factor G a second chance to translocate the tRNAs correctly. Binds to ribosomes in a GTP-dependent manner. This is Elongation factor 4 from Listeria monocytogenes serotype 4b (strain CLIP80459).